The chain runs to 244 residues: Prolactin-7D1 (244 aa).

The signal sequence occupies residues 1-30 (MLPSLIQPCSSGTLLMLLMSNLFLWEKVSS). Cystine bridges form between C99-C215 and C232-C240.

It belongs to the somatotropin/prolactin family.

It localises to the secreted. The chain is Prolactin-7D1 (Prl7d1) from Mus musculus (Mouse).